The primary structure comprises 1799 residues: 1,3-beta-glucan synthase component FKS1 (1799 aa).

Over residues Met1–Lys11 the composition is skewed to pro residues. The tract at residues Met1–Pro136 is disordered. Positions Gly12 to Pro23 are enriched in low complexity. Over residues Gly51–Gly64 the composition is skewed to gly residues. Polar residues predominate over residues Ala91–Pro101. Transmembrane regions (helical) follow at residues Ile431–Tyr451, Leu470–Ile490, Leu504–Phe524, Val530–Ala550, Phe591–Leu611, Val648–Trp668, Asn1268–Leu1288, Cys1323–Leu1343, Leu1422–Ile1442, Gly1446–Ile1466, Ile1527–Ile1547, Ile1563–Leu1583, Ala1605–Leu1625, Leu1635–Phe1655, Asp1704–Phe1724, and Gly1762–Phe1782.

The protein belongs to the glycosyltransferase 48 family. In terms of assembly, component of the 1,3-beta-glucan synthase (GS) complex composed of a catalytic subunit FKS1 and a regulatory subunit RHO1.

The protein localises to the cell membrane. It carries out the reaction [(1-&gt;3)-beta-D-glucosyl](n) + UDP-alpha-D-glucose = [(1-&gt;3)-beta-D-glucosyl](n+1) + UDP + H(+). Its activity is regulated as follows. Activated by magnesium ions. Inhibited by caspofungin and cilofungin. In terms of biological role, catalytic subunit of the 1,3-beta-glucan synthase (GS) complex. Synthesizes 1,3-beta-glucan, a major structural component of the yeast cell wall. Involved in cell wall synthesis, maintenance and remodeling. This chain is 1,3-beta-glucan synthase component FKS1, found in Cryptococcus neoformans var. grubii serotype A (strain H99 / ATCC 208821 / CBS 10515 / FGSC 9487) (Filobasidiella neoformans var. grubii).